The sequence spans 169 residues: Styrene-oxide isomerase (169 aa).

Transmembrane regions (helical) follow at residues 13–33, 61–81, 85–105, and 129–149; these read GILM…HLVG, PALN…LGFA, PHLL…FYFF, and FLAL…LAVI.

The protein resides in the membrane. It catalyses the reaction styrene oxide = 2-phenylacetaldehyde. The protein operates within aromatic compound metabolism. Epoxystyrene isomerase that catalyzes the second step in the aerobic styrene degradation pathway by converting epoxystyrene to phenylacetaldehyde. The protein is Styrene-oxide isomerase (styC) of Pseudomonas fluorescens.